A 478-amino-acid chain; its full sequence is Antiviral innate immune response effector IFIT1 (478 aa).

6 TPR repeats span residues 52–85 (VGIHNLLAYVKHLKGQNEEALKSLKEAEDLMQKE), 95–128 (LVTWSNFAWVYYHMGRLAEAQAYLDKVENICKKP), 139–174 (PEIDCEEGWALLKCGGKNYERAKACFEKALEGDHEN), 183–216 (ISAYRLDGFKLATKGYRQFSLLPLRQAVSLNPDN), 218–249 (YLKVLLALKLQDNGQEAEGEKYLEEALANMSS), and 251–284 (TYVFRYAAKFYRRKGSVDKALELLKKALQETPTS). Trp-147 lines the mRNA pocket. RNA is bound at residue Gly-190. Residues Lys-259, His-289, Gln-290, and Lys-336 each contribute to the RNA site. TPR repeat units lie at residues 305–339 (ATKGQPRGQNREKIDKMIRLAIFHFESAVENKPTF), 340–373 (EVAHLDLARMYIEAGNHRKAEETFQKLLCMKPVV), 378–412 (QDIHLQYARFQEFQKKSEINAIIHYLKAIKIEQTS), and 437–470 (LESLSLLGFVYKLKGNMNEALEYYERALRLAADF).

The protein belongs to the IFIT family. As to quaternary structure, component of an interferon-dependent multiprotein complex, at least composed of IFIT1, IFIT2 and IFIT3. Interacts (via TPR repeats 1-4) with RPL15. Interacts with STING1/MITA; could disrupt STING1 interaction with MAVS or TBK1, acting as a negative-feedback regulator of virus-triggered signaling. Interacts with EIF3E; this could be an alternative way to inhibit translation. Post-translationally, phosphorylated. ISGylated.

Its subcellular location is the cytoplasm. Plays a key role in the innate immune response as part of an interferon-dependent multiprotein complex, recognizing and sequestering viral RNAs that lack host-specific 2'-O-methylation at their 5' cap. By distinguishing these RNAs from host mRNAs, inhibits their translation by competing with the translation initiation factor eIF4E. Could also prevent viral replication through its interaction with DNA replication origin-binding protein E1 of several viruses. Causes the translocation of E1 from the nucleus to the cytoplasm and can also inhibit its helicase activity in vitro. In Macaca fascicularis (Crab-eating macaque), this protein is Antiviral innate immune response effector IFIT1.